Reading from the N-terminus, the 1362-residue chain is DNA-directed RNA polymerase subunit beta (1362 aa).

It belongs to the RNA polymerase beta chain family. As to quaternary structure, the RNAP catalytic core consists of 2 alpha, 1 beta, 1 beta' and 1 omega subunit. When a sigma factor is associated with the core the holoenzyme is formed, which can initiate transcription.

The catalysed reaction is RNA(n) + a ribonucleoside 5'-triphosphate = RNA(n+1) + diphosphate. Functionally, DNA-dependent RNA polymerase catalyzes the transcription of DNA into RNA using the four ribonucleoside triphosphates as substrates. In Acidithiobacillus ferrooxidans (strain ATCC 23270 / DSM 14882 / CIP 104768 / NCIMB 8455) (Ferrobacillus ferrooxidans (strain ATCC 23270)), this protein is DNA-directed RNA polymerase subunit beta.